The following is a 264-amino-acid chain: Thymidylate synthase (264 aa).

Arg21 contributes to the dUMP binding site. His51 contributes to the (6R)-5,10-methylene-5,6,7,8-tetrahydrofolate binding site. 126 to 127 (RR) provides a ligand contact to dUMP. The active-site Nucleophile is the Cys146. Residues 166–169 (RSAD), Asn177, and 207–209 (HIY) each bind dUMP. Residue Asp169 participates in (6R)-5,10-methylene-5,6,7,8-tetrahydrofolate binding. Residue Ala263 coordinates (6R)-5,10-methylene-5,6,7,8-tetrahydrofolate.

The protein belongs to the thymidylate synthase family. Bacterial-type ThyA subfamily. Homodimer.

The protein resides in the cytoplasm. It carries out the reaction dUMP + (6R)-5,10-methylene-5,6,7,8-tetrahydrofolate = 7,8-dihydrofolate + dTMP. It functions in the pathway pyrimidine metabolism; dTTP biosynthesis. Its function is as follows. Catalyzes the reductive methylation of 2'-deoxyuridine-5'-monophosphate (dUMP) to 2'-deoxythymidine-5'-monophosphate (dTMP) while utilizing 5,10-methylenetetrahydrofolate (mTHF) as the methyl donor and reductant in the reaction, yielding dihydrofolate (DHF) as a by-product. This enzymatic reaction provides an intracellular de novo source of dTMP, an essential precursor for DNA biosynthesis. The sequence is that of Thymidylate synthase from Bacteroides fragilis (strain ATCC 25285 / DSM 2151 / CCUG 4856 / JCM 11019 / LMG 10263 / NCTC 9343 / Onslow / VPI 2553 / EN-2).